Reading from the N-terminus, the 406-residue chain is Bifunctional enzyme IspD/IspF (406 aa).

The tract at residues 1–246 (MLQMPSKQPI…KLSASLLPDV (246 aa)) is 2-C-methyl-D-erythritol 4-phosphate cytidylyltransferase. The 2-C-methyl-D-erythritol 2,4-cyclodiphosphate synthase stretch occupies residues 247-406 (RTGNGYDVHQ…ATVVYRGVKR (160 aa)). The a divalent metal cation site is built by Asp-253 and His-255. 4-CDP-2-C-methyl-D-erythritol 2-phosphate contacts are provided by residues 253–255 (DVH) and 279–280 (HS). An a divalent metal cation-binding site is contributed by His-287. 4-CDP-2-C-methyl-D-erythritol 2-phosphate-binding positions include 301 to 303 (DIG), 377 to 380 (TTNE), Phe-384, and Arg-387.

This sequence in the N-terminal section; belongs to the IspD/TarI cytidylyltransferase family. IspD subfamily. The protein in the C-terminal section; belongs to the IspF family. Requires a divalent metal cation as cofactor.

The catalysed reaction is 2-C-methyl-D-erythritol 4-phosphate + CTP + H(+) = 4-CDP-2-C-methyl-D-erythritol + diphosphate. The enzyme catalyses 4-CDP-2-C-methyl-D-erythritol 2-phosphate = 2-C-methyl-D-erythritol 2,4-cyclic diphosphate + CMP. Its pathway is isoprenoid biosynthesis; isopentenyl diphosphate biosynthesis via DXP pathway; isopentenyl diphosphate from 1-deoxy-D-xylulose 5-phosphate: step 2/6. The protein operates within isoprenoid biosynthesis; isopentenyl diphosphate biosynthesis via DXP pathway; isopentenyl diphosphate from 1-deoxy-D-xylulose 5-phosphate: step 4/6. In terms of biological role, bifunctional enzyme that catalyzes the formation of 4-diphosphocytidyl-2-C-methyl-D-erythritol from CTP and 2-C-methyl-D-erythritol 4-phosphate (MEP) (IspD), and catalyzes the conversion of 4-diphosphocytidyl-2-C-methyl-D-erythritol 2-phosphate (CDP-ME2P) to 2-C-methyl-D-erythritol 2,4-cyclodiphosphate (ME-CPP) with a corresponding release of cytidine 5-monophosphate (CMP) (IspF). The chain is Bifunctional enzyme IspD/IspF from Rhizobium leguminosarum bv. trifolii (strain WSM2304).